The chain runs to 256 residues: Trypsin epsilon (256 aa).

The first 22 residues, Met1–Gly22, serve as a signal peptide directing secretion. Residues Leu23–Arg30 constitute a propeptide, activation peptide. One can recognise a Peptidase S1 domain in the interval Ile31 to Arg254. A disulfide bridge links Cys56 with Cys72. Active-site charge relay system residues include His71 and Asp116. 2 disulfides stabilise this stretch: Cys180–Cys197 and Cys206–Cys230. The active-site Charge relay system is the Ser210.

Belongs to the peptidase S1 family.

It is found in the secreted. The protein localises to the extracellular space. The enzyme catalyses Preferential cleavage: Arg-|-Xaa, Lys-|-Xaa.. The polypeptide is Trypsin epsilon (epsilonTry) (Drosophila erecta (Fruit fly)).